Consider the following 693-residue polypeptide: Protein arginine N-methyltransferase 7 (693 aa).

SAM-dependent MTase PRMT-type domains lie at 14–345 (SLEW…YCVW) and 358–684 (SAYQ…ITME). Arg-32 carries the omega-N-methylarginine modification. Active-site residues include Glu-144 and Glu-153.

This sequence belongs to the class I-like SAM-binding methyltransferase superfamily. Protein arginine N-methyltransferase family. PRMT7 subfamily. Homodimer and heterodimer. Interacts with CTCFL, PRMT5 and SNRPD3.

It is found in the cytoplasm. Its subcellular location is the cytosol. The protein resides in the nucleus. The catalysed reaction is L-arginyl-[protein] + S-adenosyl-L-methionine = N(omega)-methyl-L-arginyl-[protein] + S-adenosyl-L-homocysteine + H(+). In terms of biological role, arginine methyltransferase that can both catalyze the formation of omega-N monomethylarginine (MMA) and symmetrical dimethylarginine (sDMA), with a preference for the formation of MMA. Specifically mediates the symmetrical dimethylation of arginine residues in the small nuclear ribonucleoproteins Sm D1 (SNRPD1) and Sm D3 (SNRPD3); such methylation being required for the assembly and biogenesis of snRNP core particles. Specifically mediates the symmetric dimethylation of histone H4 'Arg-3' to form H4R3me2s. Plays a role in gene imprinting by being recruited by CTCFL at the H19 imprinted control region (ICR) and methylating histone H4 to form H4R3me2s, possibly leading to recruit DNA methyltransferases at these sites. May also play a role in embryonic stem cell (ESC) pluripotency. Also able to mediate the arginine methylation of histone H2A and myelin basic protein (MBP) in vitro; the relevance of such results is however unclear in vivo. The protein is Protein arginine N-methyltransferase 7 (Prmt7) of Rattus norvegicus (Rat).